The primary structure comprises 868 residues: Leucine--tRNA ligase (868 aa).

Residues 42-52 carry the 'HIGH' region motif; it reads PYPSGKLHMGH. The short motif at 627-631 is the 'KMSKS' region element; that stretch reads KMSKS. Position 630 (Lys-630) interacts with ATP.

This sequence belongs to the class-I aminoacyl-tRNA synthetase family.

It localises to the cytoplasm. It catalyses the reaction tRNA(Leu) + L-leucine + ATP = L-leucyl-tRNA(Leu) + AMP + diphosphate. The sequence is that of Leucine--tRNA ligase from Pseudomonas savastanoi pv. phaseolicola (strain 1448A / Race 6) (Pseudomonas syringae pv. phaseolicola (strain 1448A / Race 6)).